We begin with the raw amino-acid sequence, 365 residues long: Putative DNA-directed RNA polymerase subunit alpha-like 3 (365 aa).

The protein belongs to the RNA polymerase alpha chain family. In terms of assembly, in plastids the minimal PEP RNA polymerase catalytic core is composed of four subunits: alpha, beta, beta', and beta''. When a (nuclear-encoded) sigma factor is associated with the core the holoenzyme is formed, which can initiate transcription.

It localises to the plastid. The protein resides in the chloroplast. The enzyme catalyses RNA(n) + a ribonucleoside 5'-triphosphate = RNA(n+1) + diphosphate. In terms of biological role, DNA-dependent RNA polymerase catalyzes the transcription of DNA into RNA using the four ribonucleoside triphosphates as substrates. This Pelargonium hortorum (Common geranium) protein is Putative DNA-directed RNA polymerase subunit alpha-like 3 (rpoAL3-A).